The sequence spans 89 residues: Large ribosomal subunit protein eL34 (89 aa).

Residues 45 to 71 (GIPRGRPVEMRKLPKTKKRPERPMPHL) are disordered.

This sequence belongs to the eukaryotic ribosomal protein eL34 family. In terms of assembly, part of the 50S ribosomal subunit.

This Pyrococcus furiosus (strain ATCC 43587 / DSM 3638 / JCM 8422 / Vc1) protein is Large ribosomal subunit protein eL34.